The following is a 334-amino-acid chain: Protein-methionine-sulfoxide reductase catalytic subunit MsrP (334 aa).

Positions 1–44 (MKKNQFLKESDVTAESVFFMKRRQVLKALGISAAALSLPHAAHA) form a signal peptide, tat-type signal. Residues Asn-88, 91 to 92 (YE), Cys-146, Thr-181, Asn-233, Arg-238, and 249 to 251 (GIK) contribute to the Mo-molybdopterin site.

This sequence belongs to the MsrP family. As to quaternary structure, heterodimer of a catalytic subunit (MsrP) and a heme-binding subunit (MsrQ). It depends on Mo-molybdopterin as a cofactor. Post-translationally, predicted to be exported by the Tat system. The position of the signal peptide cleavage has not been experimentally proven.

Its subcellular location is the periplasm. The catalysed reaction is L-methionyl-[protein] + a quinone + H2O = L-methionyl-(S)-S-oxide-[protein] + a quinol. It catalyses the reaction L-methionyl-[protein] + a quinone + H2O = L-methionyl-(R)-S-oxide-[protein] + a quinol. In terms of biological role, part of the MsrPQ system that repairs oxidized periplasmic proteins containing methionine sulfoxide residues (Met-O), using respiratory chain electrons. Thus protects these proteins from oxidative-stress damage caused by reactive species of oxygen and chlorine generated by the host defense mechanisms. MsrPQ is essential for the maintenance of envelope integrity under bleach stress, rescuing a wide series of structurally unrelated periplasmic proteins from methionine oxidation, including the primary periplasmic chaperone SurA and the lipoprotein Pal. The catalytic subunit MsrP is non-stereospecific, being able to reduce both (R-) and (S-) diastereoisomers of methionine sulfoxide. In Shigella sonnei (strain Ss046), this protein is Protein-methionine-sulfoxide reductase catalytic subunit MsrP.